The sequence spans 236 residues: 2-C-methyl-D-erythritol 4-phosphate cytidylyltransferase (236 aa).

The protein belongs to the IspD/TarI cytidylyltransferase family. IspD subfamily.

It carries out the reaction 2-C-methyl-D-erythritol 4-phosphate + CTP + H(+) = 4-CDP-2-C-methyl-D-erythritol + diphosphate. The protein operates within isoprenoid biosynthesis; isopentenyl diphosphate biosynthesis via DXP pathway; isopentenyl diphosphate from 1-deoxy-D-xylulose 5-phosphate: step 2/6. In terms of biological role, catalyzes the formation of 4-diphosphocytidyl-2-C-methyl-D-erythritol from CTP and 2-C-methyl-D-erythritol 4-phosphate (MEP). The protein is 2-C-methyl-D-erythritol 4-phosphate cytidylyltransferase of Burkholderia vietnamiensis (strain G4 / LMG 22486) (Burkholderia cepacia (strain R1808)).